The sequence spans 197 residues: Adenylate kinase (197 aa).

16–21 (GAGKGT) is an ATP binding site. Residues 36-65 (STGDILRDHVARGTALGQQAGPLMEAGQLV) are NMP. Residues Thr37, Arg42, 63–65 (QLV), 90–93 (GFPR), and Gln97 each bind AMP. Residues 131-147 (DRGRQAVAEGRAPRADD) are LID. An ATP-binding site is contributed by Arg132. Positions 137–158 (VAEGRAPRADDNEETARKRQQV) are disordered. Positions 141-153 (RAPRADDNEETAR) are enriched in basic and acidic residues. AMP-binding residues include Arg144 and Arg155. An ATP-binding site is contributed by Gly183.

This sequence belongs to the adenylate kinase family. Monomer.

The protein localises to the cytoplasm. It catalyses the reaction AMP + ATP = 2 ADP. Its pathway is purine metabolism; AMP biosynthesis via salvage pathway; AMP from ADP: step 1/1. Functionally, catalyzes the reversible transfer of the terminal phosphate group between ATP and AMP. Plays an important role in cellular energy homeostasis and in adenine nucleotide metabolism. The chain is Adenylate kinase from Deinococcus radiodurans (strain ATCC 13939 / DSM 20539 / JCM 16871 / CCUG 27074 / LMG 4051 / NBRC 15346 / NCIMB 9279 / VKM B-1422 / R1).